The chain runs to 187 residues: Elongation factor P (187 aa).

It belongs to the elongation factor P family.

It localises to the cytoplasm. Its pathway is protein biosynthesis; polypeptide chain elongation. Its function is as follows. Involved in peptide bond synthesis. Stimulates efficient translation and peptide-bond synthesis on native or reconstituted 70S ribosomes in vitro. Probably functions indirectly by altering the affinity of the ribosome for aminoacyl-tRNA, thus increasing their reactivity as acceptors for peptidyl transferase. The chain is Elongation factor P from Corynebacterium jeikeium (strain K411).